Consider the following 354-residue polypeptide: UPF0597 protein PPA0217 (354 aa).

The protein belongs to the UPF0597 family.

The protein is UPF0597 protein PPA0217 of Cutibacterium acnes (strain DSM 16379 / KPA171202) (Propionibacterium acnes).